Here is a 313-residue protein sequence, read N- to C-terminus: Dioxygenase swnH2 (313 aa).

Fe cation-binding residues include H155, D157, and H232.

The protein belongs to the PhyH family. In terms of assembly, homodimer. Fe cation is required as a cofactor.

It functions in the pathway mycotoxin biosynthesis. In terms of biological role, aminotransferase; part of the gene cluster that mediates the biosynthesis of swainsonine (SW), a cytotoxic fungal alkaloid and a potential cancer therapy drug. Swainsonine production occurs via a multibranched pathway and is dispensable for fungal colonization of plants and infection of insect hosts. The first step of swainsonine biosynthesis is the production of the precursor pipecolic acid (PA) via conversion of L-lysine (Lys) to 1-piperideine-6-carboxylate (P6C) by the aminotransferase swnA, the latter being further reduced to PA by the reductase swnR. The PKS-NRPS hybrid synthetase swnK uptakes and condensates PA and malonyl-CoA with and without skipping of the ketoreductase (KR) domain in order to produce 3 intermediates, 1-oxoindolizidine, (1S)-1-hydroxyindolizin, and (1R)-1-hydroxyindolizine; with the transisomer (1S)-1-hydroxyindolizin being predominant. The terminal thioester reductase (TE) domain of swnK is involved in reduction of the thioester bond to release the intermediate aldehydes. The oxidoreductase swnN could contribute to the reduction of 1-oxoindolizidine to (1S)-1-hydroxyindolizin and (1R)-1-hydroxyindolizine, contributing to the major route of SW production. The dioxygenase swnH2 would be responsible for the oxidization of (1R)-1-hydroxyindolizine into (1R,2S)-1,2-dihydroxyindolizine and of (1S)-1-hydroxyindolizin to yield both (1R,2S)-1,2-dihydroxyindolizine and (1S,2S)-1,2-dihydroxyindolizine. The dioxygenase swnH1 then performs the conversion of the 1,2-dihydroxyindolizine epimers to SW. The protein is Dioxygenase swnH2 of Arthroderma benhamiae (strain ATCC MYA-4681 / CBS 112371) (Trichophyton mentagrophytes).